A 546-amino-acid chain; its full sequence is MQSSTYAVKGNAAFAFQRRTFSSDRSTTSTGIRFAGYKSLATTGPLYCSGSEAMGATLARADNGIQSVMSFSSVKARSVRAQASSDGDEEEAIPLRSEGKSSGTVLPFVGVACLGAILFGYHLGVVNGALEYLAKDLGIAENTVLQGWIVSSLLAGATVGSFTGGALADKFGRTRTFQLDAIPLAIGAFLCATAQSVQTMIVGRLLAGIGIGISSAIVPLYISEISPTEIRGALGSVNQLFICIGILAALIAGLPLAANPLWWRTMFGVAVIPSVLLAIGMAFSPESPRWLVQQGKVSEAEKAIKTLYGKERVVELVRDLSASGQGSSEPEAGWFDLFSSRYWKVVSVGAALFLFQQLAGINAVVYYSTSVFRSAGIQSDVAASALVGASNVFGTAVASSLMDKMGRKSLLLTSFGGMALSMLLLSLSFTWKALAAYSGTLAVVGTVLYVLSFSLGAGPVPALLLPEIFASRIRAKAVALSLGMHWISNFVIGLYFLSVVTKFGISSVYLGFAGVCVLAVLYIAGNVVETKGRSLEEIELALTSGA.

12 consecutive transmembrane segments (helical) span residues 105–125 (VLPF…HLGV), 148–168 (WIVS…GALA), 182–202 (IPLA…TMIV), 205–225 (LLAG…ISEI), 240–260 (LFIC…AANP), 265–285 (TMFG…AFSP), 345–365 (VVSV…NAVV), 381–401 (VAAS…ASSL), 410–430 (LLLT…LSFT), 441–461 (LAVV…GPVP), 477–497 (AVAL…LYFL), and 503–523 (FGIS…VLYI).

This sequence belongs to the major facilitator superfamily. Sugar transporter (TC 2.A.1.1) family.

It localises to the plastid. The protein resides in the chloroplast inner membrane. Its function is as follows. May be involved in the efflux of glucose towards the cytosol. In Arabidopsis thaliana (Mouse-ear cress), this protein is Plastidic glucose transporter 4.